A 221-amino-acid polypeptide reads, in one-letter code: Thiamine-phosphate synthase (221 aa).

Residues 46 to 50 (QFREK) and asparagine 82 each bind 4-amino-2-methyl-5-(diphosphooxymethyl)pyrimidine. The Mg(2+) site is built by aspartate 83 and aspartate 102. Serine 121 is a binding site for 4-amino-2-methyl-5-(diphosphooxymethyl)pyrimidine. 148 to 150 (TQS) contributes to the 2-[(2R,5Z)-2-carboxy-4-methylthiazol-5(2H)-ylidene]ethyl phosphate binding site. Lysine 151 is a 4-amino-2-methyl-5-(diphosphooxymethyl)pyrimidine binding site. Residues glycine 180 and 200 to 201 (IS) contribute to the 2-[(2R,5Z)-2-carboxy-4-methylthiazol-5(2H)-ylidene]ethyl phosphate site.

This sequence belongs to the thiamine-phosphate synthase family. Requires Mg(2+) as cofactor.

The enzyme catalyses 2-[(2R,5Z)-2-carboxy-4-methylthiazol-5(2H)-ylidene]ethyl phosphate + 4-amino-2-methyl-5-(diphosphooxymethyl)pyrimidine + 2 H(+) = thiamine phosphate + CO2 + diphosphate. It catalyses the reaction 2-(2-carboxy-4-methylthiazol-5-yl)ethyl phosphate + 4-amino-2-methyl-5-(diphosphooxymethyl)pyrimidine + 2 H(+) = thiamine phosphate + CO2 + diphosphate. It carries out the reaction 4-methyl-5-(2-phosphooxyethyl)-thiazole + 4-amino-2-methyl-5-(diphosphooxymethyl)pyrimidine + H(+) = thiamine phosphate + diphosphate. The protein operates within cofactor biosynthesis; thiamine diphosphate biosynthesis; thiamine phosphate from 4-amino-2-methyl-5-diphosphomethylpyrimidine and 4-methyl-5-(2-phosphoethyl)-thiazole: step 1/1. Functionally, condenses 4-methyl-5-(beta-hydroxyethyl)thiazole monophosphate (THZ-P) and 2-methyl-4-amino-5-hydroxymethyl pyrimidine pyrophosphate (HMP-PP) to form thiamine monophosphate (TMP). This Pasteurella multocida (strain Pm70) protein is Thiamine-phosphate synthase.